Consider the following 218-residue polypeptide: MSANALGMIIFAYLCGSISSAILICRLARLPDPRKFGSGNPGATNVLRIGGKLAAASVLICDVLKGMIPVWLAYYLNVPPFYLGIVAIAACLGHIYPVFFHFKGGKGVATAFGSIAAIGWDLSGLIAGTWLLTVLLSGYSSLGAIISALLAPFYVWWFKPEFTYPVALLSCLVLYRHHDNIQRLWRGQESRIWHKLKKKTEKTDKEIIQEAKEQEKED.

The next 5 membrane-spanning stretches (helical) occupy residues 5–25 (ALGM…ILIC), 53–73 (LAAA…VWLA), 80–100 (PFYL…PVFF), 115–135 (IAAI…LTVL), and 138–158 (GYSS…VWWF).

This sequence belongs to the PlsY family. In terms of assembly, probably interacts with PlsX.

The protein localises to the cell inner membrane. It catalyses the reaction an acyl phosphate + sn-glycerol 3-phosphate = a 1-acyl-sn-glycero-3-phosphate + phosphate. The protein operates within lipid metabolism; phospholipid metabolism. Catalyzes the transfer of an acyl group from acyl-phosphate (acyl-PO(4)) to glycerol-3-phosphate (G3P) to form lysophosphatidic acid (LPA). This enzyme utilizes acyl-phosphate as fatty acyl donor, but not acyl-CoA or acyl-ACP. The sequence is that of Glycerol-3-phosphate acyltransferase from Proteus mirabilis (strain HI4320).